Consider the following 580-residue polypeptide: Protein O-linked-mannose beta-1,4-N-acetylglucosaminyltransferase 2 (580 aa).

Over 1–4 (MHLS) the chain is Cytoplasmic. Residues 5-25 (AVLNALLVSVLAAVLWKHVRL) form a helical; Signal-anchor for type II membrane protein membrane-spanning segment. Residues 26–580 (REHAASLEEE…PFADVLVCST (555 aa)) are Lumenal-facing. N-linked (GlcNAc...) asparagine glycosylation is found at Asn-99 and Asn-276. The Fibronectin type-III domain occupies 488–580 (ARCQASVQGA…PFADVLVCST (93 aa)).

The protein belongs to the glycosyltransferase 61 family.

It is found in the endoplasmic reticulum membrane. The catalysed reaction is 3-O-(alpha-D-mannosyl)-L-threonyl-[protein] + UDP-N-acetyl-alpha-D-glucosamine = 3-O-(N-acetyl-beta-D-glucosaminyl-(1-&gt;4)-alpha-D-mannosyl)-L-threonyl-[protein] + UDP + H(+). Its pathway is protein modification; protein glycosylation. O-linked mannose beta-1,4-N-acetylglucosaminyltransferase that transfers UDP-N-acetyl-D-glucosamine to the 4-position of the mannose to generate N-acetyl-D-glucosamine-beta-1,4-O-D-mannosylprotein. Involved in the biosynthesis of the phosphorylated O-mannosyl trisaccharide (N-acetylgalactosamine-beta-3-N-acetylglucosamine-beta-4-(phosphate-6-)mannose), a carbohydrate structure present in alpha-dystroglycan (DAG1), which is required for binding laminin G-like domain-containing extracellular proteins with high affinity. This is Protein O-linked-mannose beta-1,4-N-acetylglucosaminyltransferase 2 (POMGNT2) from Bos taurus (Bovine).